Consider the following 1577-residue polypeptide: Pentafunctional AROM polypeptide (1577 aa).

Residues 1–384 (MSMKMADPTK…YEPKASVVSN (384 aa)) form a 3-dehydroquinate synthase region. NAD(+) is bound by residues 48–50 (DTN), 85–88 (ENSK), 116–118 (GGV), and Asp121. Arg132 contacts 7-phospho-2-dehydro-3-deoxy-D-arabino-heptonate. Residue 141–142 (TT) coordinates NAD(+). 7-phospho-2-dehydro-3-deoxy-D-arabino-heptonate-binding residues include Asp148 and Lys154. Position 163 (Lys163) interacts with NAD(+). Asn164 contacts 7-phospho-2-dehydro-3-deoxy-D-arabino-heptonate. Residues 181 to 184 (FIDT) and Asn192 contribute to the NAD(+) site. Glu196 provides a ligand contact to Zn(2+). Residues 196 to 199 (EVIK) and Lys250 each bind 7-phospho-2-dehydro-3-deoxy-D-arabino-heptonate. Glu260 acts as the Proton acceptor; for 3-dehydroquinate synthase activity in catalysis. 7-phospho-2-dehydro-3-deoxy-D-arabino-heptonate is bound by residues 264 to 268 (RNLLN) and His271. His271 lines the Zn(2+) pocket. Catalysis depends on His275, which acts as the Proton acceptor; for 3-dehydroquinate synthase activity. Positions 287 and 356 each coordinate 7-phospho-2-dehydro-3-deoxy-D-arabino-heptonate. Residue His287 participates in Zn(2+) binding. Positions 397 to 842 (VIPGVPKSLN…WDALKQKFGV (446 aa)) are EPSP synthase. Cys824 functions as the For EPSP synthase activity in the catalytic mechanism. A shikimate kinase region spans residues 864–1056 (NASVIIIGMR…RKKRLSFFVS (193 aa)). 871–878 (GMRGAGKT) serves as a coordination point for ATP. Residues 1057-1277 (LTLPDLRDTG…AAPGQLSAAE (221 aa)) form a 3-dehydroquinase region. His1180 (proton acceptor; for 3-dehydroquinate dehydratase activity) is an active-site residue. Lys1208 serves as the catalytic Schiff-base intermediate with substrate; for 3-dehydroquinate dehydratase activity. Residues 1290–1577 (AKKFAIFGKP…RNAVLGTNEK (288 aa)) form a shikimate dehydrogenase region.

It in the N-terminal section; belongs to the sugar phosphate cyclases superfamily. Dehydroquinate synthase family. The protein in the 2nd section; belongs to the EPSP synthase family. This sequence in the 3rd section; belongs to the shikimate kinase family. In the 4th section; belongs to the type-I 3-dehydroquinase family. It in the C-terminal section; belongs to the shikimate dehydrogenase family. As to quaternary structure, homodimer. It depends on Zn(2+) as a cofactor.

It is found in the cytoplasm. The catalysed reaction is 7-phospho-2-dehydro-3-deoxy-D-arabino-heptonate = 3-dehydroquinate + phosphate. The enzyme catalyses 3-dehydroquinate = 3-dehydroshikimate + H2O. It catalyses the reaction shikimate + NADP(+) = 3-dehydroshikimate + NADPH + H(+). It carries out the reaction shikimate + ATP = 3-phosphoshikimate + ADP + H(+). The catalysed reaction is 3-phosphoshikimate + phosphoenolpyruvate = 5-O-(1-carboxyvinyl)-3-phosphoshikimate + phosphate. Its pathway is metabolic intermediate biosynthesis; chorismate biosynthesis; chorismate from D-erythrose 4-phosphate and phosphoenolpyruvate: step 2/7. The protein operates within metabolic intermediate biosynthesis; chorismate biosynthesis; chorismate from D-erythrose 4-phosphate and phosphoenolpyruvate: step 3/7. It participates in metabolic intermediate biosynthesis; chorismate biosynthesis; chorismate from D-erythrose 4-phosphate and phosphoenolpyruvate: step 4/7. It functions in the pathway metabolic intermediate biosynthesis; chorismate biosynthesis; chorismate from D-erythrose 4-phosphate and phosphoenolpyruvate: step 5/7. Its pathway is metabolic intermediate biosynthesis; chorismate biosynthesis; chorismate from D-erythrose 4-phosphate and phosphoenolpyruvate: step 6/7. The AROM polypeptide catalyzes 5 consecutive enzymatic reactions in prechorismate polyaromatic amino acid biosynthesis. This chain is Pentafunctional AROM polypeptide, found in Talaromyces stipitatus (strain ATCC 10500 / CBS 375.48 / QM 6759 / NRRL 1006) (Penicillium stipitatum).